The sequence spans 46 residues: Mu-segestritoxin-Sf1h (46 aa).

4 disulfides stabilise this stretch: cysteine 3-cysteine 19, cysteine 10-cysteine 22, cysteine 18-cysteine 42, and cysteine 24-cysteine 40. Positions 31–33 (RPW) are keys region for toxin activity.

It belongs to the neurotoxin 16 (SFI) family. Expressed by the venom gland.

It is found in the secreted. Its function is as follows. Insecticidal toxin. It inhibits insect voltage-gated sodium channels (Nav) by partially blocking the channel pore in DUM neurons from the American cockroach, not by acting as a gating modifier. The inhibition is only partially reversible after prolonged washout. In vivo, the toxin causes flaccid paralysis followed by death when injected into Heliothis virescens larvae. It also causes uncoordinated movements followed by full paralysis to sheep blowflies (Lucilia cuprina). When the toxin is fused to snowdrop lectin, it is orally active against larvae of the tomato moth (Laconobia oleracea), the rice brown planthopper (Nilaparvata lugens), and the peach-potato aphid (Myzus persicae). In Segestria florentina (Tube-web spider), this protein is Mu-segestritoxin-Sf1h.